We begin with the raw amino-acid sequence, 230 residues long: Large ribosomal subunit protein uL1 (230 aa).

Belongs to the universal ribosomal protein uL1 family. As to quaternary structure, part of the 50S ribosomal subunit.

In terms of biological role, binds directly to 23S rRNA. The L1 stalk is quite mobile in the ribosome, and is involved in E site tRNA release. Its function is as follows. Protein L1 is also a translational repressor protein, it controls the translation of the L11 operon by binding to its mRNA. This chain is Large ribosomal subunit protein uL1, found in Nitrosospira multiformis (strain ATCC 25196 / NCIMB 11849 / C 71).